A 1220-amino-acid polypeptide reads, in one-letter code: Putative cell agglutination protein SPAPB2C8.01 (1220 aa).

Positions 1–21 (MAVSRLLILICLYSFVTFAYP) are cleaved as a signal peptide. N-linked (GlcNAc...) asparagine glycosylation is found at Asn-44, Asn-72, Asn-131, and Asn-160. Tandem repeats lie at residues 110-145 (NTIT…EPAA), 146-181 (GTVT…EPEA), 182-217 (GTVT…DTAA), 218-253 (GTVT…EPEA), 254-289 (GTVT…DTAA), 290-325 (GTVT…EPEA), 326-361 (GTVT…DTAA), 362-397 (GTVT…EPEA), 398-433 (GTVT…DTAA), 434-469 (GTVT…EPEA), 470-505 (GTVT…DTAA), 506-541 (GTVT…EPEA), 542-577 (GTVT…DTAA), 578-613 (GTVT…EPEA), 614-649 (GTVT…EPAA), 650-685 (GTVT…EPAA), 686-721 (GTVT…EPAA), 722-757 (GTVT…EPAA), 758-793 (GTVT…DPEA), 794-829 (GSVT…EPAA), 830-865 (GTVT…DPEA), 866-901 (GSVT…EPAA), 902-937 (GTVT…EPSG), and 938-973 (STVT…LPAP). Residues 110-973 (NTITTTLYSG…GTVEVILPAP (864 aa)) are 24 X 36 AA approximate tandem repeats. Asn-232 is a glycosylation site (N-linked (GlcNAc...) asparagine). N-linked (GlcNAc...) asparagine glycosylation occurs at Asn-304. N-linked (GlcNAc...) asparagine glycosylation is present at Asn-376. The N-linked (GlcNAc...) asparagine glycan is linked to Asn-448. N-linked (GlcNAc...) asparagine glycosylation is present at Asn-520. Asn-592 is a glycosylation site (N-linked (GlcNAc...) asparagine). Residues 1039–1202 (FTQPAYFGSS…YAATSYAYTA (164 aa)) enclose the PA14 domain.

It belongs to the mam3/map4 family.

Its subcellular location is the cell surface. Functionally, may be involved in agglutination during conjugation or other aspects of colony formation. This Schizosaccharomyces pombe (strain 972 / ATCC 24843) (Fission yeast) protein is Putative cell agglutination protein SPAPB2C8.01.